Consider the following 162-residue polypeptide: Large ribosomal subunit protein uL15 (162 aa).

The segment covering 1–13 has biased composition (basic and acidic residues); sequence MNLNELRDNEGSR. Residues 1–39 are disordered; that stretch reads MNLNELRDNEGSRYRKKRLGRGIGSGKGKTSGRGVKGQK. A compositionally biased stretch (gly residues) spans 21-35; the sequence is RGIGSGKGKTSGRGV.

It belongs to the universal ribosomal protein uL15 family. In terms of assembly, part of the 50S ribosomal subunit.

Binds to the 23S rRNA. In Gluconobacter oxydans (strain 621H) (Gluconobacter suboxydans), this protein is Large ribosomal subunit protein uL15.